The primary structure comprises 494 residues: Potassium voltage-gated channel subfamily A member 2 (494 aa).

The interval 1–25 is disordered; that stretch reads MTVATGDPSDEAAAHPGNPAEYDPD. The interval 1–124 is tetramerization domain; sequence MTVATGDPSD…YELGDEAIEL (124 aa). Over 1 to 159 the chain is Cytoplasmic; that stretch reads MTVATGDPSD…LLFEYPESSG (159 aa). A helical transmembrane segment spans residues 160-181; the sequence is PARIIAIISVMVILISIVSFCL. Over 182–216 the chain is Extracellular; the sequence is ETLPIFRNDDDEPHSVFDTNTNTTIYFTSTYFTDP. N-linked (GlcNAc...) asparagine glycosylation is present at N203. A helical membrane pass occupies residues 217-238; sequence FFILETLCIIWFSFEFLVRLFA. The S-palmitoyl cysteine moiety is linked to residue C239. At 239–249 the chain is on the cytoplasmic side; the sequence is CPSKSGFFGNV. The helical transmembrane segment at 250 to 270 threads the bilayer; the sequence is MNIIDVVAIIPYFITLATELA. The Extracellular segment spans residues 271 to 284; sequence EKPEDGQAGQQAMS. Residues 285 to 305 traverse the membrane as a helical; Voltage-sensor segment; it reads LAILRVIRLVRVFRIFKLSRH. Residues 306 to 320 lie on the Cytoplasmic side of the membrane; that stretch reads SKGLQILGQTLKASM. The segment at 307–320 is S4-S5 linker; the sequence is KGLQILGQTLKASM. The chain crosses the membrane as a helical span at residues 321-342; sequence RELGLLIFFLFIGVILFSSAVY. Over 343–356 the chain is Extracellular; the sequence is FAEADEPESQFESI. Positions 357 to 368 form an intramembrane region, helical; sequence PDAFWWAVVSMT. Residues 369-374 carry the Selectivity filter motif; the sequence is TVGYGD. The stretch at 369-376 is an intramembrane region; it reads TVGYGDMV. Topologically, residues 377–383 are extracellular; the sequence is PTTIGGK. The chain crosses the membrane as a helical span at residues 384–412; the sequence is IVGSLCAIAGVLTIALPVPVIVSNFNYFY. Over 413 to 494 the chain is Cytoplasmic; the sequence is HRETEGEEQA…VNITKMLTDV (82 aa). Positions 492–494 match the PDZ-binding motif; that stretch reads TDV.

The protein belongs to the potassium channel family. A (Shaker) (TC 1.A.1.2) subfamily. Kv1.2/KCNA2 sub-subfamily. In terms of assembly, homotetramer and heterotetramer with other family members. Expressed in oligodendrocytes.

It localises to the cell membrane. The catalysed reaction is K(+)(in) = K(+)(out). Its function is as follows. Voltage-gated potassium channel that mediates transmembrane potassium transport in excitable membranes, primarily in the brain and central nervous system. Prevents aberrant action potential firing and regulates neuronal output. Forms tetrameric potassium-selective channels through which potassium ions pass in accordance with their electrochemical gradient. The channel alternates between opened and closed conformations in response to the voltage difference across the membrane. Can form functional homotetrameric channels and heterotetrameric channels with other family members; the channels characteristics depend critically on the types of channel-forming alpha subunits that are present. Channel properties are modulated by cytoplasmic beta subunits that regulate the subcellular location of the alpha subunits. In vivo, membranes probably contain a mixture of heteromeric potassium channel complexes, making it difficult to assign currents observed in intact tissues to any particular potassium channel family member. Homotetrameric KCNA2 forms a delayed-rectifier potassium channel that opens in response to membrane depolarization, followed by slow spontaneous channel closure. Regulates neuronal excitability and plays a role as pacemaker in the regulation of neuronal action potentials. KCNA2-containing channels play a presynaptic role and prevent hyperexcitability and aberrant action potential firing. Response to toxins that are selective for KCNA2-containing potassium channels suggests that in Purkinje cells, dendritic subthreshold KCNA2-containing potassium channels prevent random spontaneous calcium spikes, suppressing dendritic hyperexcitability without hindering the generation of somatic action potentials, and thereby play an important role in motor coordination. Plays a role in the induction of long-term potentiation of neuron excitability in the CA3 layer of the hippocampus. In Oncorhynchus mykiss (Rainbow trout), this protein is Potassium voltage-gated channel subfamily A member 2 (kcna2).